Here is a 247-residue protein sequence, read N- to C-terminus: 2-amino-5-formylamino-6-ribosylaminopyrimidin-4(3H)-one 5'-monophosphate deformylase (247 aa).

E41, H43, D52, and H121 together coordinate Fe cation.

Belongs to the creatininase superfamily. FAPy deformylase family. As to quaternary structure, homodimer. Fe(2+) is required as a cofactor. Zn(2+) serves as cofactor.

It carries out the reaction 2-amino-5-formylamino-6-(5-phospho-D-ribosylamino)pyrimidin-4(3H)-one + H2O = 2,5-diamino-6-(1-D-ribosylamino)pyrimidin-4(3H)-one 5'-phosphate + formate + H(+). It functions in the pathway cofactor biosynthesis; coenzyme F420 biosynthesis. Its pathway is cofactor biosynthesis; riboflavin biosynthesis. Functionally, catalyzes the hydrolysis of the formamide of 2-amino-5-formylamino-6-ribosylamino-4(3H)-pyrimidinone 5'-monophosphate (FAPy) to form 2,5-diamino-6-ribosylamino-4(3H)-pyrimidinone 5'-phosphate (APy). This chain is 2-amino-5-formylamino-6-ribosylaminopyrimidin-4(3H)-one 5'-monophosphate deformylase, found in Methanothermus fervidus (strain ATCC 43054 / DSM 2088 / JCM 10308 / V24 S).